Consider the following 429-residue polypeptide: Xyloglucan O-acetyltransferase 1 (429 aa).

Topologically, residues 1-20 (MGSPFKDHHHHHHPFSLAKK) are cytoplasmic. Residues 21-41 (LIPWTFYAMIPLVLFRLYFYP) form a helical; Signal-anchor for type II membrane protein membrane-spanning segment. Residues 42-429 (YPLHNITTPI…KWDYESRREE (388 aa)) lie on the Lumenal side of the membrane. N-linked (GlcNAc...) asparagine glycans are attached at residues N46 and N89. Disulfide bonds link C72-C122, C93-C158, C102-C402, and C317-C398. A GDS motif motif is present at residues 145–147 (GDS). The Nucleophile role is filled by S147. N-linked (GlcNAc...) asparagine glycosylation is found at N189, N263, and N351. D397 acts as the Proton donor in catalysis. A DXXH motif motif is present at residues 397–400 (DCVH). H400 functions as the Proton acceptor in the catalytic mechanism.

This sequence belongs to the PC-esterase family. TBL subfamily.

The protein resides in the golgi apparatus membrane. Xyloglucan acetyltransferase that catalyzes the acetylation of fucosylated Gal residues on xyloglucan side chains. Predominantly catalyze 6-O-monoacetylation of Gal residues in the Fuc-Gal-Xyl trisaccharide side chains of xyloglucan oligomers. This is Xyloglucan O-acetyltransferase 1 from Populus trichocarpa (Western balsam poplar).